Reading from the N-terminus, the 122-residue chain is Large ribosomal subunit protein uL14 (122 aa).

It belongs to the universal ribosomal protein uL14 family. In terms of assembly, part of the 50S ribosomal subunit. Forms a cluster with proteins L3 and L19. In the 70S ribosome, L14 and L19 interact and together make contacts with the 16S rRNA in bridges B5 and B8.

Functionally, binds to 23S rRNA. Forms part of two intersubunit bridges in the 70S ribosome. The polypeptide is Large ribosomal subunit protein uL14 (Shewanella halifaxensis (strain HAW-EB4)).